Consider the following 151-residue polypeptide: Small ribosomal subunit protein uS11 (151 aa).

At Ser16 the chain carries Phosphoserine. Glycyl lysine isopeptide (Lys-Gly) (interchain with G-Cter in SUMO2) cross-links involve residues Lys61, Lys63, and Lys106. The interval 131–151 (DVTPIPSDSTRRKGGRRGRRL) is disordered. At Thr133 the chain carries Phosphothreonine. Residue Ser139 is modified to Phosphoserine. Residues 142–151 (RKGGRRGRRL) are compositionally biased toward basic residues.

Belongs to the universal ribosomal protein uS11 family. As to quaternary structure, component of the small ribosomal subunit. Part of the small subunit (SSU) processome, composed of more than 70 proteins and the RNA chaperone small nucleolar RNA (snoRNA) U3.

It is found in the cytoplasm. Its subcellular location is the nucleus. The protein localises to the nucleolus. In terms of biological role, component of the small ribosomal subunit. The ribosome is a large ribonucleoprotein complex responsible for the synthesis of proteins in the cell. Part of the small subunit (SSU) processome, first precursor of the small eukaryotic ribosomal subunit. During the assembly of the SSU processome in the nucleolus, many ribosome biogenesis factors, an RNA chaperone and ribosomal proteins associate with the nascent pre-rRNA and work in concert to generate RNA folding, modifications, rearrangements and cleavage as well as targeted degradation of pre-ribosomal RNA by the RNA exosome. The polypeptide is Small ribosomal subunit protein uS11 (Rps14) (Mus musculus (Mouse)).